Consider the following 1036-residue polypeptide: PDZ domain-containing RING finger protein 4 (1036 aa).

The RING-type; degenerate zinc finger occupies 18–56 (CKLCGQVLEEPLCTPCGHVFCASCLLPWAVRRRRCPLQC). The span at 129–160 (ARGGCGPTPRAGRGGGARGGPPGGRWGRGRGP) shows a compositional bias: gly residues. Residues 129-161 (ARGGCGPTPRAGRGGGARGGPPGGRWGRGRGPG) are disordered. 2 consecutive PDZ domains span residues 224–314 (TIVL…LRRT) and 402–486 (EVEL…VARP). The segment at 515 to 590 (HNEAMQPTAN…SLKSKRDLGQ (76 aa)) is disordered. The segment covering 548-566 (NHEKDSGVGRTDESLRNDE) has biased composition (basic and acidic residues). Positions 655-689 (NQGEQEGVEHELQLLNEELRNIELECQNIMQAHRL) form a coiled coil. A compositionally biased stretch (basic and acidic residues) spans 726–735 (EHPEKSDKDS). The disordered stretch occupies residues 726–819 (EHPEKSDKDS…VLEGSKLPDQ (94 aa)). Over residues 736–750 (SSAYNTAESCRSTPL) the composition is skewed to polar residues. A compositionally biased stretch (low complexity) spans 774–799 (STMAATQSSSGQSSKESTSTKAKTTE). The span at 805-819 (ESKEKVLEGSKLPDQ) shows a compositional bias: basic and acidic residues.

The protein is PDZ domain-containing RING finger protein 4 (PDZRN4) of Homo sapiens (Human).